Reading from the N-terminus, the 371-residue chain is Pyruvate dehydrogenase E1 component subunit alpha (371 aa).

Heterodimer of an alpha and a beta chain. It depends on thiamine diphosphate as a cofactor.

It catalyses the reaction N(6)-[(R)-lipoyl]-L-lysyl-[protein] + pyruvate + H(+) = N(6)-[(R)-S(8)-acetyldihydrolipoyl]-L-lysyl-[protein] + CO2. Functionally, the pyruvate dehydrogenase complex catalyzes the overall conversion of pyruvate to acetyl-CoA and CO(2). It contains multiple copies of three enzymatic components: pyruvate dehydrogenase (E1), dihydrolipoamide acetyltransferase (E2) and lipoamide dehydrogenase (E3). This is Pyruvate dehydrogenase E1 component subunit alpha from Bacillus cereus.